The chain runs to 355 residues: Cyclin-D1-binding protein 1 (355 aa).

An N-acetylalanine modification is found at Ala2. Interaction with TCF3 regions lie at residues 2–181 (ASST…VDLV) and 147–355 (ISCN…AVEL). Residues 2-187 (ASSTTPVSFL…VDLVKDAHEE (186 aa)) are interaction with RPLP0. The segment at 2–205 (ASSTTPVSFL…DPYCGLLDDS (204 aa)) is required for interaction with CCND1. The interval 203-224 (DDSEDNSDSHHNEDGVGLPSNR) is disordered. The interaction with RPLP0 stretch occupies residues 235–355 (LITPCLALVR…KELTQRAVEL (121 aa)).

Belongs to the CCNDBP1 family. Interacts with CCND1 and GRAP2. May also interact with COPS5, RPLP0, SIRT6, SYF2 and TCF3. In terms of processing, phosphorylated.

It localises to the cytoplasm. The protein localises to the nucleus. Functionally, may negatively regulate cell cycle progression. May act at least in part via inhibition of the cyclin-D1/CDK4 complex, thereby preventing phosphorylation of RB1 and blocking E2F-dependent transcription. The protein is Cyclin-D1-binding protein 1 (Ccndbp1) of Rattus norvegicus (Rat).